Reading from the N-terminus, the 180-residue chain is Shikimate kinase (180 aa).

Residue 14 to 19 (GAGKSC) participates in ATP binding. S18 contacts Mg(2+). The substrate site is built by D36, R60, and G82. R120 is a binding site for ATP. R139 provides a ligand contact to substrate.

This sequence belongs to the shikimate kinase family. Monomer. Mg(2+) serves as cofactor.

The protein resides in the cytoplasm. The enzyme catalyses shikimate + ATP = 3-phosphoshikimate + ADP + H(+). It functions in the pathway metabolic intermediate biosynthesis; chorismate biosynthesis; chorismate from D-erythrose 4-phosphate and phosphoenolpyruvate: step 5/7. In terms of biological role, catalyzes the specific phosphorylation of the 3-hydroxyl group of shikimic acid using ATP as a cosubstrate. The sequence is that of Shikimate kinase from Xanthomonas oryzae pv. oryzae (strain PXO99A).